Consider the following 331-residue polypeptide: Probable endo-beta-1,4-glucanase B (331 aa).

The first 18 residues, methionine 1–alanine 18, serve as a signal peptide directing secretion. N-linked (GlcNAc...) asparagine glycans are attached at residues asparagine 38 and asparagine 100. The active-site Proton donor is glutamate 160. A glycan (N-linked (GlcNAc...) asparagine) is linked at asparagine 211. Catalysis depends on glutamate 266, which acts as the Nucleophile. N-linked (GlcNAc...) asparagine glycosylation occurs at asparagine 288.

It belongs to the glycosyl hydrolase 5 (cellulase A) family.

The protein resides in the secreted. The enzyme catalyses Endohydrolysis of (1-&gt;4)-beta-D-glucosidic linkages in cellulose, lichenin and cereal beta-D-glucans.. Its function is as follows. Has endoglucanase activity on substrates containing beta-1,4 glycosidic bonds, like in carboxymethylcellulose (CMC), hydroxyethylcellulose (HEC) and beta-glucan. Involved in the degradation of complex natural cellulosic substrates. This is Probable endo-beta-1,4-glucanase B (eglB) from Aspergillus niger (strain ATCC MYA-4892 / CBS 513.88 / FGSC A1513).